The sequence spans 158 residues: Transcription elongation factor GreA (158 aa).

A coiled-coil region spans residues 47–68; it reads AEYDAAKEAQGLLELKIKKMEE.

This sequence belongs to the GreA/GreB family.

In terms of biological role, necessary for efficient RNA polymerase transcription elongation past template-encoded arresting sites. The arresting sites in DNA have the property of trapping a certain fraction of elongating RNA polymerases that pass through, resulting in locked ternary complexes. Cleavage of the nascent transcript by cleavage factors such as GreA or GreB allows the resumption of elongation from the new 3'terminus. GreA releases sequences of 2 to 3 nucleotides. In Flavobacterium psychrophilum (strain ATCC 49511 / DSM 21280 / CIP 103535 / JIP02/86), this protein is Transcription elongation factor GreA.